The following is a 207-amino-acid chain: Putative 3-methyladenine DNA glycosylase (207 aa).

It belongs to the DNA glycosylase MPG family.

The sequence is that of Putative 3-methyladenine DNA glycosylase from Burkholderia cenocepacia (strain HI2424).